The primary structure comprises 239 residues: Leucyl/phenylalanyl-tRNA--protein transferase (239 aa).

The protein belongs to the L/F-transferase family.

The protein resides in the cytoplasm. The enzyme catalyses N-terminal L-lysyl-[protein] + L-leucyl-tRNA(Leu) = N-terminal L-leucyl-L-lysyl-[protein] + tRNA(Leu) + H(+). It catalyses the reaction N-terminal L-arginyl-[protein] + L-leucyl-tRNA(Leu) = N-terminal L-leucyl-L-arginyl-[protein] + tRNA(Leu) + H(+). It carries out the reaction L-phenylalanyl-tRNA(Phe) + an N-terminal L-alpha-aminoacyl-[protein] = an N-terminal L-phenylalanyl-L-alpha-aminoacyl-[protein] + tRNA(Phe). Functions in the N-end rule pathway of protein degradation where it conjugates Leu, Phe and, less efficiently, Met from aminoacyl-tRNAs to the N-termini of proteins containing an N-terminal arginine or lysine. This Aliivibrio fischeri (strain MJ11) (Vibrio fischeri) protein is Leucyl/phenylalanyl-tRNA--protein transferase.